The primary structure comprises 154 residues: Putative NADPH-dependent 7-cyano-7-deazaguanine reductase (154 aa).

D52 acts as the Proton donor in catalysis. Substrate is bound by residues 67-69 (VES) and 86-87 (HE).

The protein belongs to the GTP cyclohydrolase I family. QueF type 1 subfamily.

Its subcellular location is the cytoplasm. It carries out the reaction 7-aminomethyl-7-carbaguanine + 2 NADP(+) = 7-cyano-7-deazaguanine + 2 NADPH + 3 H(+). Its pathway is tRNA modification; tRNA-queuosine biosynthesis. Catalyzes the NADPH-dependent reduction of 7-cyano-7-deazaguanine (preQ0) to 7-aminomethyl-7-deazaguanine (preQ1). The sequence is that of Putative NADPH-dependent 7-cyano-7-deazaguanine reductase from Streptococcus pneumoniae (strain ATCC BAA-255 / R6).